Here is a 367-residue protein sequence, read N- to C-terminus: Alginate lyase (367 aa).

The N-terminal stretch at 1-27 is a signal peptide; sequence MKTSHLIRIALPGALAAALLASQVSQA. Substrate-binding positions include 65–66, 138–139, and Tyr-256; these read SK and HT.

It belongs to the polysaccharide lyase 5 family.

The protein resides in the periplasm. It carries out the reaction Eliminative cleavage of alginate to give oligosaccharides with 4-deoxy-alpha-L-erythro-hex-4-enuronosyl groups at their non-reducing ends and beta-D-mannuronate at their reducing end.. Functionally, catalyzes the depolymerization of alginate by cleaving the beta-1,4 glycosidic bond between two adjacent sugar residues via a beta-elimination mechanism. May serve to degrade mislocalized alginate that is trapped in the periplasmic space. The protein is Alginate lyase of Pseudomonas aeruginosa (strain LESB58).